Reading from the N-terminus, the 261-residue chain is Cytochrome c oxidase subunit 3 (261 aa).

Residues methionine 1–proline 15 lie on the Mitochondrial matrix side of the membrane. The chain crosses the membrane as a helical span at residues tryptophan 16–tryptophan 34. At phenylalanine 35–threonine 40 the chain is on the mitochondrial intermembrane side. Residues threonine 41–threonine 66 traverse the membrane as a helical segment. Over phenylalanine 67–threonine 72 the chain is Mitochondrial matrix. The helical transmembrane segment at proline 73–serine 105 threads the bilayer. The Mitochondrial intermembrane portion of the chain corresponds to leucine 106–glutamate 128. The helical transmembrane segment at valine 129 to methionine 152 threads the bilayer. The Mitochondrial matrix portion of the chain corresponds to glutamate 153–glutamate 155. The helical transmembrane segment at arginine 156–glutamate 183 threads the bilayer. The Mitochondrial intermembrane portion of the chain corresponds to alanine 184–aspartate 190. The chain crosses the membrane as a helical span at residues glycine 191–isoleucine 223. The Mitochondrial matrix portion of the chain corresponds to glutamine 224–histidine 232. Residues phenylalanine 233–isoleucine 256 traverse the membrane as a helical segment. The Mitochondrial intermembrane portion of the chain corresponds to tyrosine 257 to serine 261.

The protein belongs to the cytochrome c oxidase subunit 3 family. Component of the cytochrome c oxidase (complex IV, CIV), a multisubunit enzyme composed of 14 subunits. The complex is composed of a catalytic core of 3 subunits MT-CO1, MT-CO2 and MT-CO3, encoded in the mitochondrial DNA, and 11 supernumerary subunits COX4I, COX5A, COX5B, COX6A, COX6B, COX6C, COX7A, COX7B, COX7C, COX8 and NDUFA4, which are encoded in the nuclear genome. The complex exists as a monomer or a dimer and forms supercomplexes (SCs) in the inner mitochondrial membrane with NADH-ubiquinone oxidoreductase (complex I, CI) and ubiquinol-cytochrome c oxidoreductase (cytochrome b-c1 complex, complex III, CIII), resulting in different assemblies (supercomplex SCI(1)III(2)IV(1) and megacomplex MCI(2)III(2)IV(2)).

The protein localises to the mitochondrion inner membrane. It carries out the reaction 4 Fe(II)-[cytochrome c] + O2 + 8 H(+)(in) = 4 Fe(III)-[cytochrome c] + 2 H2O + 4 H(+)(out). In terms of biological role, component of the cytochrome c oxidase, the last enzyme in the mitochondrial electron transport chain which drives oxidative phosphorylation. The respiratory chain contains 3 multisubunit complexes succinate dehydrogenase (complex II, CII), ubiquinol-cytochrome c oxidoreductase (cytochrome b-c1 complex, complex III, CIII) and cytochrome c oxidase (complex IV, CIV), that cooperate to transfer electrons derived from NADH and succinate to molecular oxygen, creating an electrochemical gradient over the inner membrane that drives transmembrane transport and the ATP synthase. Cytochrome c oxidase is the component of the respiratory chain that catalyzes the reduction of oxygen to water. Electrons originating from reduced cytochrome c in the intermembrane space (IMS) are transferred via the dinuclear copper A center (CU(A)) of subunit 2 and heme A of subunit 1 to the active site in subunit 1, a binuclear center (BNC) formed by heme A3 and copper B (CU(B)). The BNC reduces molecular oxygen to 2 water molecules using 4 electrons from cytochrome c in the IMS and 4 protons from the mitochondrial matrix. In Cyprinus carpio (Common carp), this protein is Cytochrome c oxidase subunit 3 (mt-co3).